We begin with the raw amino-acid sequence, 504 residues long: ATP synthase subunit beta (504 aa).

Position 181-188 (181-188 (GGAGVGKT)) interacts with ATP.

It belongs to the ATPase alpha/beta chains family. In terms of assembly, F-type ATPases have 2 components, CF(1) - the catalytic core - and CF(0) - the membrane proton channel. CF(1) has five subunits: alpha(3), beta(3), gamma(1), delta(1), epsilon(1). CF(0) has three main subunits: a(1), b(2) and c(9-12). The alpha and beta chains form an alternating ring which encloses part of the gamma chain. CF(1) is attached to CF(0) by a central stalk formed by the gamma and epsilon chains, while a peripheral stalk is formed by the delta and b chains.

It localises to the cell inner membrane. It carries out the reaction ATP + H2O + 4 H(+)(in) = ADP + phosphate + 5 H(+)(out). Its function is as follows. Produces ATP from ADP in the presence of a proton gradient across the membrane. The catalytic sites are hosted primarily by the beta subunits. This Ehrlichia ruminantium (strain Gardel) protein is ATP synthase subunit beta.